The following is a 153-amino-acid chain: Ribosome maturation factor RimP (153 aa).

The protein belongs to the RimP family.

The protein localises to the cytoplasm. Required for maturation of 30S ribosomal subunits. The chain is Ribosome maturation factor RimP from Burkholderia pseudomallei (strain 1710b).